Consider the following 100-residue polypeptide: MAKKSLIEREKKRKKLVQEYNSIRKLLKEEIKKASSLKEKWEIHKKSQILPRNSAPTRLHRRCSLTGRSRSNYRDFGLCRHVLREMAHTCSLPGVTKSSW.

Belongs to the universal ribosomal protein uS14 family. As to quaternary structure, part of the 30S ribosomal subunit.

The protein resides in the plastid. The protein localises to the chloroplast. Its function is as follows. Binds 16S rRNA, required for the assembly of 30S particles. The chain is Small ribosomal subunit protein uS14c from Psilotum nudum (Whisk fern).